Consider the following 1788-residue polypeptide: Protein Shroom3 (1788 aa).

Disordered regions lie at residues 1 to 25 (MMQVSQGTIGSPWHQAYHSSSSTSD), 146 to 174 (EVNSSSVKNRNYSRQPAYNRHSIGPHGRL), 225 to 263 (KAAGLHSTNTSSNAAQQPKHVHGDGHLHPVLERSPESSP), 321 to 367 (GAKS…KQEG), 382 to 401 (PDISTSSLTNDRNDQQPLRL), 469 to 488 (NIASSSHNKMDERSNRQADH), 498 to 548 (TVHA…GNKL), 727 to 768 (EISP…VTPT), 793 to 821 (TAEQKKRSYSEPEKMNEVGASESESAPLT), 876 to 915 (TGRRPSSQETRLLKERSQSTYFSGSIMDNQSMTSTSSMNS), 1011 to 1067 (SRRH…SASN), 1086 to 1133 (SFKN…PETK), 1171 to 1263 (KRGK…SEAE), 1303 to 1324 (DTESFSGTFVPPSPPPFPPPSL), 1404 to 1467 (VPAP…AKSQ), and 1507 to 1538 (ALKEKNQKRKAKKQIDNIIAPESEXKEEKRET). Composition is skewed to polar residues over residues 147–161 (VNSSSVKNRNYSRQP) and 230–240 (HSTNTSSNAAQ). 2 stretches are compositionally biased toward basic and acidic residues: residues 245 to 259 (VHGDGHLHPVLERSP) and 357 to 366 (SVKEREKKQE). Basic and acidic residues predominate over residues 476–488 (NKMDERSNRQADH). The ASD1 domain occupies 708–811 (VKDAQCKVLE…SEPEKMNEVG (104 aa)). The segment covering 793-808 (TAEQKKRSYSEPEKMN) has biased composition (basic and acidic residues). The segment covering 893–903 (QSTYFSGSIMD) has biased composition (polar residues). The segment covering 904-915 (NQSMTSTSSMNS) has biased composition (low complexity). Composition is skewed to polar residues over residues 1055 to 1067 (EVGNKTSYASASN), 1100 to 1124 (ENSSTIQRSAQLENQRNTKTQSISG), and 1211 to 1263 (TSAQ…SEAE). Residues 1313 to 1323 (PPSPPPFPPPS) show a composition bias toward pro residues. A compositionally biased stretch (polar residues) spans 1433–1451 (SILQSSEGNFNPSDSQSTL). The region spanning 1467-1756 (QELAKEIVTK…QLRCLTESLP (290 aa)) is the ASD2 domain. Basic and acidic residues predominate over residues 1529–1538 (SEXKEEKRET). Residues 1653–1708 (RLARVENALSSLGEDASAEERKTWNEKKKQLCGQHEDARELKENLDRREKLVMDFL) are a coiled coil.

This sequence belongs to the shroom family. As to quaternary structure, interacts with F-actin. Interacts with ROCK1. In terms of tissue distribution, expressed in epithelial cells of the cement gland.

Its subcellular location is the cell junction. It is found in the adherens junction. The protein resides in the cytoplasm. The protein localises to the cytoskeleton. It localises to the apical cell membrane. Functionally, controls cell shape changes in the neuroepithelium during neural tube closure. Induces apical constriction in epithelial cells by promoting the apical accumulation of F-actin and myosin II, and probably by bundling stress fibers. Induces apicobasal cell elongation by redistributing gamma-tubulin and directing the assembly of robust apicobasal microtubule arrays. The chain is Protein Shroom3 (shroom3) from Xenopus laevis (African clawed frog).